The primary structure comprises 677 residues: mRNA 3'-end-processing protein RNA14 (677 aa).

HAT repeat units follow at residues 56-88, 90-124, 138-170, 181-214, 257-289, and 298-330; these read ESYAKVREVYEQFHNTFPFYSPAWTLQLKGELA, DEFETVEKILAQCLSGKLENNDLSLWSTYLDYIRR, VIVKAFQLVMQKCAIFEPKSSSFWNEYLNFLEQ, QRIDMLREFYKKMLCVPFDNLEKMWNRYTQWEQE, RTANKKNIPQPGTSDSNIQQLQIWLNWIKWERE, and MLSQRISYVYKQGIQYMIFSAEMWYDYSMYISE.

In terms of assembly, component of the CFIA complex, which is composed of RNA14, RNA15, PCF11 and CLP1. Interacts with FIP1, PFS2, YSH1 and probably also with RNA15. Probably interacts with the phosphorylated CTD domain of RPB1/RNA polymerase II.

The protein localises to the nucleus. The protein resides in the cytoplasm. Component of the cleavage factor IA (CFIA) complex, which is involved in the endonucleolytic cleavage during polyadenylation-dependent pre-mRNA 3'-end formation and cooperates with the cleavage factor NAB4/CFIB and the cleavage and polyadenylation factor (CPF) complex. In Saccharomyces cerevisiae (strain ATCC 204508 / S288c) (Baker's yeast), this protein is mRNA 3'-end-processing protein RNA14 (RNA14).